A 422-amino-acid chain; its full sequence is Osteomodulin (422 aa).

The signal sequence occupies residues 1 to 20 (MGFSSLVCVLFFFLGVKVYC). The propeptide occupies 21-27 (QYESYQW). Residues tyrosine 22, tyrosine 25, tyrosine 31, tyrosine 39, tyrosine 51, and tyrosine 77 each carry the sulfotyrosine modification. One can recognise an LRRNT domain in the interval 53–91 (APFHQHTLGCASECFCPPNFPSSMYCDNRKLKTIPNIPA). 11 LRR repeats span residues 92–113 (HIQQ…SFIN), 116–129 (HLKE…KIKS), 142–164 (NLLQ…PKSL), 165–184 (ERIF…AVNG), 187–207 (NLTM…QEKV), 213–233 (KLMQ…GLPS), 234–255 (SLMY…YFNK), 258–280 (KLHA…FNLS), 281–294 (NLIE…KLKQ), 301–322 (NLEH…VMCP), and 331–353 (HLTH…IFLC). 2 N-linked (GlcNAc...) asparagine glycosylation sites follow: asparagine 113 and asparagine 121. A glycan (N-linked (GlcNAc...) asparagine) is linked at asparagine 187. 2 N-linked (GlcNAc...) asparagine glycosylation sites follow: asparagine 242 and asparagine 278. Asparagine 316 is a glycosylation site (N-linked (GlcNAc...) asparagine). Cysteine 321 and cysteine 353 are disulfide-bonded. The interval 385–422 (DDGDSEDHDDHHEGPEEEGTEENIDAHYYGSQEWQETI) is disordered. A sulfotyrosine mark is found at tyrosine 412 and tyrosine 413.

It belongs to the small leucine-rich proteoglycan (SLRP) family. SLRP class II subfamily. As to quaternary structure, binds the alpha(V)beta(3)-integrin. The N-terminus is blocked. In terms of processing, glycosylated; contains keratan sulfate. Post-translationally, sulfated on tyrosine residue(s). As to expression, bone specific (at protein level).

It is found in the secreted. The protein localises to the extracellular space. The protein resides in the extracellular matrix. Functionally, may be implicated in biomineralization processes. Has a function in binding of osteoblasts via the alpha(V)beta(3)-integrin. This Bos taurus (Bovine) protein is Osteomodulin (OMD).